The chain runs to 117 residues: MVNIYDNANQMAKDLQETEQFKDLKKSLENLKNKPESLDLYQRMDKLQQQILAAQNSGQPLSDDVKKEYQKINEEVRNNDELKDMITKEQALFQMINDVQQAMTKPIGDLYDDLKAK.

This sequence belongs to the UPF0342 family.

This is UPF0342 protein LGAS_1451 from Lactobacillus gasseri (strain ATCC 33323 / DSM 20243 / BCRC 14619 / CIP 102991 / JCM 1131 / KCTC 3163 / NCIMB 11718 / NCTC 13722 / AM63).